The sequence spans 96 residues: Co-chaperonin GroES 2 (96 aa).

Belongs to the GroES chaperonin family. Heptamer of 7 subunits arranged in a ring. Interacts with the chaperonin GroEL.

It localises to the cytoplasm. Its function is as follows. Together with the chaperonin GroEL, plays an essential role in assisting protein folding. The GroEL-GroES system forms a nano-cage that allows encapsulation of the non-native substrate proteins and provides a physical environment optimized to promote and accelerate protein folding. GroES binds to the apical surface of the GroEL ring, thereby capping the opening of the GroEL channel. This is Co-chaperonin GroES 2 from Vibrio cholerae serotype O1 (strain ATCC 39315 / El Tor Inaba N16961).